The chain runs to 271 residues: Tryptophan synthase alpha chain (271 aa).

Active-site proton acceptor residues include Glu-49 and Asp-60.

The protein belongs to the TrpA family. Tetramer of two alpha and two beta chains.

It carries out the reaction (1S,2R)-1-C-(indol-3-yl)glycerol 3-phosphate + L-serine = D-glyceraldehyde 3-phosphate + L-tryptophan + H2O. Its pathway is amino-acid biosynthesis; L-tryptophan biosynthesis; L-tryptophan from chorismate: step 5/5. In terms of biological role, the alpha subunit is responsible for the aldol cleavage of indoleglycerol phosphate to indole and glyceraldehyde 3-phosphate. This chain is Tryptophan synthase alpha chain, found in Leptothrix cholodnii (strain ATCC 51168 / LMG 8142 / SP-6) (Leptothrix discophora (strain SP-6)).